The primary structure comprises 309 residues: Putative HTH-type transcriptional regulatory protein AF_1787 (309 aa).

An HTH cro/C1-type domain is found at 131-185 (IREARERLGLSVGDMAKMLGVSRRTVKKYEEGTDTTLSTAAKIEEIIGTFAIKEI). Residues 142-161 (VGDMAKMLGVSRRTVKKYEE) constitute a DNA-binding region (H-T-H motif).

This chain is Putative HTH-type transcriptional regulatory protein AF_1787, found in Archaeoglobus fulgidus (strain ATCC 49558 / DSM 4304 / JCM 9628 / NBRC 100126 / VC-16).